A 208-amino-acid chain; its full sequence is Sodium/potassium-transporting ATPase subunit beta-1-interacting protein 2 (208 aa).

4 consecutive transmembrane segments (helical) span residues 1-23 (MGYC…CVLE), 35-55 (APIL…FGTI), 64-84 (GYAV…CFYL), and 148-168 (VAHS…ACYV).

The protein belongs to the NKAIN family. In terms of assembly, interacts with ATP1B1. As to expression, detected in the brain only and specifically in neurons; expressed in multiple regions such as cerebral cortex, thalamus, cerebellum, olfactory bulb and brainstem, but not in the hippocampus.

It localises to the cell membrane. This chain is Sodium/potassium-transporting ATPase subunit beta-1-interacting protein 2 (Nkain2), found in Mus musculus (Mouse).